Reading from the N-terminus, the 334-residue chain is ELMO domain-containing protein 1 (334 aa).

Residues 133 to 314 (QHEEMLLKLW…KFRKRIIKQL (182 aa)) form the ELMO domain.

Its function is as follows. Acts as a GTPase-activating protein (GAP) toward guanine nucleotide exchange factors like ARL2, ARL3, ARF1 and ARF6, but not for GTPases outside the Arf family. In Homo sapiens (Human), this protein is ELMO domain-containing protein 1 (ELMOD1).